A 258-amino-acid polypeptide reads, in one-letter code: Small ribosomal subunit protein uS2 (258 aa).

The protein belongs to the universal ribosomal protein uS2 family.

The chain is Small ribosomal subunit protein uS2 from Granulibacter bethesdensis (strain ATCC BAA-1260 / CGDNIH1).